The following is a 348-amino-acid chain: D-alanine--D-alanine ligase (348 aa).

The 209-residue stretch at Lys136–Glu344 folds into the ATP-grasp domain. Asn171–Glu226 serves as a coordination point for ATP. 3 residues coordinate Mg(2+): Asp297, Glu311, and Asn313.

Belongs to the D-alanine--D-alanine ligase family. It depends on Mg(2+) as a cofactor. Requires Mn(2+) as cofactor.

It localises to the cytoplasm. It catalyses the reaction 2 D-alanine + ATP = D-alanyl-D-alanine + ADP + phosphate + H(+). It participates in cell wall biogenesis; peptidoglycan biosynthesis. In terms of biological role, cell wall formation. In Prochlorococcus marinus (strain NATL1A), this protein is D-alanine--D-alanine ligase.